The chain runs to 222 residues: MKFFIDTASLDEIKAANELGVLDGVTTNPSLIAKIVKDSTNFTYADFKAHIAKICEIVDGPVSAEVTTLKAGEMIAQGEELAAIHKNIVVKCPLTVDGLKAIKHFSSNGIKTNATLVFSPTQALLAAKAGADFVSPFVGRLDDISTSGMELVRQIVTIYDNYGYLTEVIVASVRNPLHVVESAMVGADIATIPYSVIKQLANHPLTDKGLEKFMEDAAVMKP.

Lysine 91 functions as the Schiff-base intermediate with substrate in the catalytic mechanism.

This sequence belongs to the transaldolase family. Type 3B subfamily.

The protein resides in the cytoplasm. The enzyme catalyses D-sedoheptulose 7-phosphate + D-glyceraldehyde 3-phosphate = D-erythrose 4-phosphate + beta-D-fructose 6-phosphate. It participates in carbohydrate degradation; pentose phosphate pathway; D-glyceraldehyde 3-phosphate and beta-D-fructose 6-phosphate from D-ribose 5-phosphate and D-xylulose 5-phosphate (non-oxidative stage): step 2/3. Its function is as follows. Transaldolase is important for the balance of metabolites in the pentose-phosphate pathway. The polypeptide is Probable transaldolase (Chlorobaculum tepidum (strain ATCC 49652 / DSM 12025 / NBRC 103806 / TLS) (Chlorobium tepidum)).